The chain runs to 1088 residues: DNA damage-binding protein 1b (1088 aa).

The protein belongs to the DDB1 family. As to quaternary structure, interacts with DDA1. Binds to KTN80.2/DWA3. Interacts with HTD1.

Its subcellular location is the nucleus. Its pathway is protein modification; protein ubiquitination. Functionally, component of light signal transduction machinery. Involved in repression of photomorphogenesis in darkness. Plays a role in DNA repair by forming with DDB2 the UV-damaged DNA-binding protein complex (UV-DDB). This is DNA damage-binding protein 1b from Arabidopsis thaliana (Mouse-ear cress).